The primary structure comprises 309 residues: Porphobilinogen deaminase (309 aa).

Cysteine 240 is subject to S-(dipyrrolylmethanemethyl)cysteine.

Belongs to the HMBS family. As to quaternary structure, monomer. Dipyrromethane is required as a cofactor.

The enzyme catalyses 4 porphobilinogen + H2O = hydroxymethylbilane + 4 NH4(+). Its pathway is porphyrin-containing compound metabolism; protoporphyrin-IX biosynthesis; coproporphyrinogen-III from 5-aminolevulinate: step 2/4. Functionally, tetrapolymerization of the monopyrrole PBG into the hydroxymethylbilane pre-uroporphyrinogen in several discrete steps. This chain is Porphobilinogen deaminase, found in Chromobacterium violaceum (strain ATCC 12472 / DSM 30191 / JCM 1249 / CCUG 213 / NBRC 12614 / NCIMB 9131 / NCTC 9757 / MK).